We begin with the raw amino-acid sequence, 357 residues long: NADH-quinone oxidoreductase subunit H (357 aa).

Helical transmembrane passes span 20-40 (WLLVWTLVKIVAVVLPLMGCV), 92-112 (ALFVIAPIMTIMPALAAWAVI), 127-147 (LLFVMAITSLEVYGVIVAGWA), 165-185 (ISYEIAMGFVLVIVLMVSGSL), 203-223 (GLTFLSWNWLPLLPMFVIYII), 259-279 (FFLAEYANMILISMMATLMFL), 294-314 (IPGWIWLGIKTLFVVTLFIWF), and 329-349 (LGWKVFIPLTLVYLLIVAIWM).

The protein belongs to the complex I subunit 1 family. In terms of assembly, NDH-1 is composed of 14 different subunits. Subunits NuoA, H, J, K, L, M, N constitute the membrane sector of the complex.

The protein resides in the cell inner membrane. It carries out the reaction a quinone + NADH + 5 H(+)(in) = a quinol + NAD(+) + 4 H(+)(out). Functionally, NDH-1 shuttles electrons from NADH, via FMN and iron-sulfur (Fe-S) centers, to quinones in the respiratory chain. The immediate electron acceptor for the enzyme in this species is believed to be ubiquinone. Couples the redox reaction to proton translocation (for every two electrons transferred, four hydrogen ions are translocated across the cytoplasmic membrane), and thus conserves the redox energy in a proton gradient. This subunit may bind ubiquinone. This is NADH-quinone oxidoreductase subunit H from Herminiimonas arsenicoxydans.